The following is a 118-amino-acid chain: V-type proton ATPase subunit G 2 (118 aa).

A disordered region spans residues 25 to 90 (ARKRKARRLK…VQGMQSSQQR (66 aa)). The segment covering 35 to 56 (QAKEEAQMEVEQYRREREHEFQ) has biased composition (basic and acidic residues). Composition is skewed to polar residues over residues 57–69 (SKQQ…QGNL) and 78–89 (RRQVQGMQSSQQ).

It belongs to the V-ATPase G subunit family. In terms of assembly, V-ATPase is a heteromultimeric enzyme made up of two complexes: the ATP-hydrolytic V1 complex and the proton translocation V0 complex. The V1 complex consists of three catalytic AB heterodimers that form a heterohexamer, three peripheral stalks each consisting of EG heterodimers, one central rotor including subunits D and F, and the regulatory subunits C and H. The proton translocation complex V0 consists of the proton transport subunit a, a ring of proteolipid subunits c9c'', rotary subunit d, subunits e and f, and the accessory subunits ATP6AP1/Ac45 and ATP6AP2/PRR. In terms of tissue distribution, brain.

Its subcellular location is the melanosome. The protein localises to the cytoplasmic vesicle. The protein resides in the clathrin-coated vesicle membrane. In terms of biological role, subunit of the V1 complex of vacuolar(H+)-ATPase (V-ATPase), a multisubunit enzyme composed of a peripheral complex (V1) that hydrolyzes ATP and a membrane integral complex (V0) that translocates protons. V-ATPase is responsible for acidifying and maintaining the pH of intracellular compartments and in some cell types, is targeted to the plasma membrane, where it is responsible for acidifying the extracellular environment. The sequence is that of V-type proton ATPase subunit G 2 (ATP6V1G2) from Homo sapiens (Human).